Reading from the N-terminus, the 301-residue chain is tRNA dimethylallyltransferase (301 aa).

Gly2–Thr9 contributes to the ATP binding site. Position 4-9 (Thr4–Thr9) interacts with substrate. Interaction with substrate tRNA stretches follow at residues Asp27–Met30 and Gln151–Arg155.

This sequence belongs to the IPP transferase family. In terms of assembly, monomer. The cofactor is Mg(2+).

It catalyses the reaction adenosine(37) in tRNA + dimethylallyl diphosphate = N(6)-dimethylallyladenosine(37) in tRNA + diphosphate. Functionally, catalyzes the transfer of a dimethylallyl group onto the adenine at position 37 in tRNAs that read codons beginning with uridine, leading to the formation of N6-(dimethylallyl)adenosine (i(6)A). The chain is tRNA dimethylallyltransferase from Coxiella burnetii (strain CbuK_Q154) (Coxiella burnetii (strain Q154)).